A 289-amino-acid polypeptide reads, in one-letter code: Oxygen-dependent coproporphyrinogen-III oxidase (289 aa).

S82 is a substrate binding site. A divalent metal cation is bound by residues H86 and H96. H96 functions as the Proton donor in the catalytic mechanism. Residue 98-100 participates in substrate binding; the sequence is NYR. Residues H130 and H160 each coordinate a divalent metal cation. Residues 224 to 259 are important for dimerization; it reads YVEFNLVWDRGTIFGLQTNGRIESILMSMPPLVRWE.

The protein belongs to the aerobic coproporphyrinogen-III oxidase family. As to quaternary structure, homodimer. It depends on a divalent metal cation as a cofactor.

It localises to the cytoplasm. The enzyme catalyses coproporphyrinogen III + O2 + 2 H(+) = protoporphyrinogen IX + 2 CO2 + 2 H2O. Its pathway is porphyrin-containing compound metabolism; protoporphyrin-IX biosynthesis; protoporphyrinogen-IX from coproporphyrinogen-III (O2 route): step 1/1. Involved in the heme and chlorophyll biosynthesis. Catalyzes the aerobic oxidative decarboxylation of propionate groups of rings A and B of coproporphyrinogen-III to yield the vinyl groups in protoporphyrinogen-IX. This chain is Oxygen-dependent coproporphyrinogen-III oxidase, found in Gloeobacter violaceus (strain ATCC 29082 / PCC 7421).